The chain runs to 477 residues: Glycogen synthase (477 aa).

Residue K15 coordinates ADP-alpha-D-glucose.

It belongs to the glycosyltransferase 1 family. Bacterial/plant glycogen synthase subfamily.

The catalysed reaction is [(1-&gt;4)-alpha-D-glucosyl](n) + ADP-alpha-D-glucose = [(1-&gt;4)-alpha-D-glucosyl](n+1) + ADP + H(+). Its pathway is glycan biosynthesis; glycogen biosynthesis. Its function is as follows. Synthesizes alpha-1,4-glucan chains using ADP-glucose. In Shigella flexneri, this protein is Glycogen synthase.